Here is a 771-residue protein sequence, read N- to C-terminus: Probable exo-1,4-beta-xylosidase bxlB (771 aa).

The signal sequence occupies residues 1-25; it reads MVGLTPQHYGNAIALMTYLASTALA. An N-linked (GlcNAc...) asparagine glycan is attached at asparagine 67. The active site involves aspartate 293. Residues asparagine 305, asparagine 345, asparagine 423, asparagine 462, and asparagine 463 are each glycosylated (N-linked (GlcNAc...) asparagine).

This sequence belongs to the glycosyl hydrolase 3 family.

Its subcellular location is the secreted. The enzyme catalyses Hydrolysis of (1-&gt;4)-beta-D-xylans, to remove successive D-xylose residues from the non-reducing termini.. It functions in the pathway glycan degradation; xylan degradation. Xylan 1,4-beta-xylosidase involved in the hydrolysis of xylan, a major structural heterogeneous polysaccharide found in plant biomass representing the second most abundant polysaccharide in the biosphere, after cellulose. The polypeptide is Probable exo-1,4-beta-xylosidase bxlB (bxlB) (Aspergillus clavatus (strain ATCC 1007 / CBS 513.65 / DSM 816 / NCTC 3887 / NRRL 1 / QM 1276 / 107)).